A 621-amino-acid chain; its full sequence is MEHIRTTKVEQVKLLDRFSTSNKSLTGTLYLTATHLLFIDSHQKETWILHHHIASVEKLALTTSGCPLVIQCKNFRTVHFIVPRERDCHDIYNSLLQLSKQAKYEDLYAFSYNPKQNDSERLQGWQLIDLAEEYKRMGVPNSHWQLSDANRDYKICETYPRELYVPRIASKPIIVGSSKFRSKGRFPVLSYYHQDKEAAICRCSQPLSGFSARCLEDEHLLQAISKANPVNRYMYVMDTRPKLNAMANRAAGKGYENEDNYSNIRFQFVGIENIHVMRSSLQKLLEVNGTKGLSVNDFYSGLESSGWLRHIKAVMDAAIFLAKAITVENASVLVHCSDGWDRTSQVCSLGSLLLDSYYRTIKGFMVLIEKDWISFGHKFSERCGQLDGDPKEVSPVFTQFLECVWHLTEQFPQAFEFSEAFLLQIHEHIHSCQFGNFLGNCQKEREELKLKEKTYSLWPFLLEDQKKYLNPLYSSESHRFTVLEPNTVSFNFKFWRNMYHQFDRTLHPRQSVFNIIMNMNEQNKQLEKDIKDLESKIKQRKNKQTDGILTKELLHSVHPESPNLKTSLCFKEQTLLPVNDALRTIEGSSPADNRYSEYAEEFSKSEPAVVSLEYGVARMTC.

The region spanning 1–101 (MEHIRTTKVE…YNSLLQLSKQ (101 aa)) is the GRAM domain. An interaction with RAB1B region spans residues 2–141 (EHIRTTKVEQ…EEYKRMGVPN (140 aa)). Tyr-108 carries the phosphotyrosine modification. Residues 124-499 (GWQLIDLAEE…FNFKFWRNMY (376 aa)) form the Myotubularin phosphatase domain. The a 1,2-diacyl-sn-glycero-3-phospho-(1D-myo-inositol-3,5-bisphosphate) site is built by Asn-248, Asn-273, and Ile-274. Positions 248, 273, and 274 each coordinate a 1,2-diacyl-sn-glycero-3-phospho-(1D-myo-inositol-3-phosphate). Catalysis depends on Cys-336, which acts as the Phosphocysteine intermediate. Residues Ser-337, Asp-338, Gly-339, Trp-340, Asp-341, Arg-342, Lys-378, and Arg-382 each coordinate a 1,2-diacyl-sn-glycero-3-phospho-(1D-myo-inositol-3,5-bisphosphate). A 1,2-diacyl-sn-glycero-3-phospho-(1D-myo-inositol-3-phosphate) contacts are provided by Ser-337, Asp-338, Gly-339, Trp-340, Asp-341, and Arg-342. Arg-382 provides a ligand contact to a 1,2-diacyl-sn-glycero-3-phospho-(1D-myo-inositol-3-phosphate). Residues Ser-556, Ser-561, Ser-589, and Ser-611 each carry the phosphoserine modification.

The protein belongs to the protein-tyrosine phosphatase family. Non-receptor class myotubularin subfamily. In terms of assembly, homodimer. Heterodimer (via C-terminus) with MTMR9 (via C-terminus). Interacts with ALKBH4. Interacts with KCNN4. Interacts (via GRAM domain) with RAB1B (in GDP-bound form); the interaction regulates MTMR6 recruitment to the endoplasmic reticulum-Golgi intermediate compartment. As to expression, expressed in CD4+ T-cells.

It localises to the cytoplasm. Its subcellular location is the endoplasmic reticulum-Golgi intermediate compartment. The protein resides in the endoplasmic reticulum. It is found in the cell projection. The protein localises to the ruffle membrane. It localises to the perinuclear region. The enzyme catalyses a 1,2-diacyl-sn-glycero-3-phospho-(1D-myo-inositol-3,5-bisphosphate) + H2O = a 1,2-diacyl-sn-glycero-3-phospho-(1D-myo-inositol-5-phosphate) + phosphate. It carries out the reaction a 1,2-diacyl-sn-glycero-3-phospho-(1D-myo-inositol-3-phosphate) + H2O = a 1,2-diacyl-sn-glycero-3-phospho-(1D-myo-inositol) + phosphate. It catalyses the reaction 1,2-dioctanoyl-sn-glycero-3-phospho-(1D-myo-inositol-3,5-bisphosphate) + H2O = 1,2-dioctanoyl-sn-glycero-3-phospho-(1D-myo-inositol-5-phosphate) + phosphate. The catalysed reaction is 1,2-dioctanoyl-sn-glycero-3-phospho-(1-D-myo-inositol-3-phosphate) + H2O = 1,2-dioctanoyl-sn-glycero-3-phospho-(1D-myo-inositol) + phosphate. Its activity is regulated as follows. Allosterically activated by phosphatidylserine and/or phosphatidylinositol 4-phosphate (PtdIns(4)P), and phosphatidylinositol 5-phosphate (PtdIns(5)P). Interaction with MTMR9 increases catalytic activity towards phosphatidylinositol 3,5-bisphosphate. Lipid phosphatase that specifically dephosphorylates the D-3 position of phosphatidylinositol 3-phosphate and phosphatidylinositol 3,5-bisphosphate, generating phosphatidylinositol and phosphatidylinositol 5-phosphate. Binds with high affinity to phosphatidylinositol 3,5-bisphosphate (PtdIns(3,5)P2) but also to phosphatidylinositol 3-phosphate (PtdIns(3)P), phosphatidylinositol 4-phosphate (PtdIns(4)P), and phosphatidylinositol 5-phosphate (PtdIns(5)P), phosphatidic acid and phosphatidylserine. Negatively regulates ER-Golgi protein transport. Probably in association with MTMR9, plays a role in the late stages of macropinocytosis by dephosphorylating phosphatidylinositol 3-phosphate in membrane ruffles. Acts as a negative regulator of KCNN4/KCa3.1 channel activity in CD4(+) T-cells possibly by decreasing intracellular levels of phosphatidylinositol 3-phosphate. Negatively regulates proliferation of reactivated CD4(+) T-cells. In complex with MTMR9, negatively regulates DNA damage-induced apoptosis. The formation of the MTMR6-MTMR9 complex stabilizes both MTMR6 and MTMR9 protein levels. The sequence is that of Phosphatidylinositol-3,5-bisphosphate 3-phosphatase MTMR6 from Homo sapiens (Human).